The chain runs to 214 residues: Phosphatidylserine decarboxylase proenzyme (214 aa).

Ser183 acts as the Schiff-base intermediate with substrate; via pyruvic acid in catalysis. Pyruvic acid (Ser); by autocatalysis is present on Ser183.

Belongs to the phosphatidylserine decarboxylase family. PSD-A subfamily. Heterodimer of a large membrane-associated beta subunit and a small pyruvoyl-containing alpha subunit. Pyruvate serves as cofactor. Post-translationally, is synthesized initially as an inactive proenzyme. Formation of the active enzyme involves a self-maturation process in which the active site pyruvoyl group is generated from an internal serine residue via an autocatalytic post-translational modification. Two non-identical subunits are generated from the proenzyme in this reaction, and the pyruvate is formed at the N-terminus of the alpha chain, which is derived from the carboxyl end of the proenzyme. The post-translation cleavage follows an unusual pathway, termed non-hydrolytic serinolysis, in which the side chain hydroxyl group of the serine supplies its oxygen atom to form the C-terminus of the beta chain, while the remainder of the serine residue undergoes an oxidative deamination to produce ammonia and the pyruvoyl prosthetic group on the alpha chain.

Its subcellular location is the cell membrane. The enzyme catalyses a 1,2-diacyl-sn-glycero-3-phospho-L-serine + H(+) = a 1,2-diacyl-sn-glycero-3-phosphoethanolamine + CO2. It participates in phospholipid metabolism; phosphatidylethanolamine biosynthesis; phosphatidylethanolamine from CDP-diacylglycerol: step 2/2. Functionally, catalyzes the formation of phosphatidylethanolamine (PtdEtn) from phosphatidylserine (PtdSer). The chain is Phosphatidylserine decarboxylase proenzyme from Desulfotalea psychrophila (strain LSv54 / DSM 12343).